The chain runs to 266 residues: Phosphate import ATP-binding protein PstB 1 (266 aa).

Residues 21–261 (ISTQDLSVFY…PKGEITEDYI (241 aa)) enclose the ABC transporter domain. 54–61 (GGSGSGKS) is an ATP binding site.

It belongs to the ABC transporter superfamily. Phosphate importer (TC 3.A.1.7) family. In terms of assembly, the complex is composed of two ATP-binding proteins (PstB), two transmembrane proteins (PstC and PstA) and a solute-binding protein (PstS).

Its subcellular location is the cell membrane. It catalyses the reaction phosphate(out) + ATP + H2O = ADP + 2 phosphate(in) + H(+). Part of the ABC transporter complex PstSACB involved in phosphate import. Responsible for energy coupling to the transport system. The polypeptide is Phosphate import ATP-binding protein PstB 1 (Lactobacillus johnsonii (strain CNCM I-12250 / La1 / NCC 533)).